The sequence spans 1678 residues: Clathrin heavy chain (1678 aa).

WD40-like repeat regions lie at residues 24 to 67, 68 to 107, 108 to 149, 150 to 195, 196 to 257, 258 to 301, and 302 to 330; these read SFSF…RPIS, ADSAIMNPASKVIALKAQKTLQIFNIEMKSKMKAHTMNED, VVFW…SSLN, GCQI…QAIE, GHAA…PEAQ, NDFP…ISAD, and TIFVTAPHEASGGIIGVNRKGQVLSVTVD. CHCR repeat units follow at residues 538-684, 687-829, 834-973, 980-1125, 1129-1270, 1275-1421, and 1424-1567; these read VAEE…QICV, ATKY…SEDI, ILVV…QLID, LSET…VKEA, YIKA…FRLA, LHIV…LLLN, and LLVL…YDCF. Positions 1334 to 1643 are involved in binding clathrin light chain; it reads REHLELFWSR…IQMEPQLMIT (310 aa). Residues 1552-1677 form a trimerization region; it reads EELLGWFLER…AGGRNMGYPY (126 aa).

The protein belongs to the clathrin heavy chain family. Clathrin triskelions, composed of 3 heavy chains and 3 light chains, are the basic subunits of the clathrin coat. Interacts with sau.

Its subcellular location is the cytoplasmic vesicle membrane. The protein resides in the membrane. It localises to the coated pit. Clathrin is the major protein of the polyhedral coat of coated pits and vesicles. In Drosophila melanogaster (Fruit fly), this protein is Clathrin heavy chain (Chc).